A 61-amino-acid chain; its full sequence is Small ribosomal subunit protein uS14 (61 aa).

Zn(2+) contacts are provided by Cys24, Cys27, Cys40, and Cys43.

It belongs to the universal ribosomal protein uS14 family. Zinc-binding uS14 subfamily. In terms of assembly, part of the 30S ribosomal subunit. Contacts proteins S3 and S10. Requires Zn(2+) as cofactor.

In terms of biological role, binds 16S rRNA, required for the assembly of 30S particles and may also be responsible for determining the conformation of the 16S rRNA at the A site. The chain is Small ribosomal subunit protein uS14 from Acidithiobacillus ferrooxidans (strain ATCC 23270 / DSM 14882 / CIP 104768 / NCIMB 8455) (Ferrobacillus ferrooxidans (strain ATCC 23270)).